Here is a 456-residue protein sequence, read N- to C-terminus: Exodeoxyribonuclease 7 large subunit (456 aa).

This sequence belongs to the XseA family. Heterooligomer composed of large and small subunits.

The protein resides in the cytoplasm. It carries out the reaction Exonucleolytic cleavage in either 5'- to 3'- or 3'- to 5'-direction to yield nucleoside 5'-phosphates.. Functionally, bidirectionally degrades single-stranded DNA into large acid-insoluble oligonucleotides, which are then degraded further into small acid-soluble oligonucleotides. The sequence is that of Exodeoxyribonuclease 7 large subunit from Escherichia coli (strain SE11).